A 149-amino-acid chain; its full sequence is Glutamate mutase sigma subunit (149 aa).

A B12-binding domain is found at 5 to 138 (DPTVVLGTIG…DAVKTELDVD (134 aa)). Adenosylcob(III)alamin-binding positions include 15 to 19 (SDAHA), H18, 63 to 65 (SSL), and 94 to 98 (NLAVG).

The protein belongs to the methylaspartate mutase GlmS subunit family. As to quaternary structure, heterotetramer composed of 2 epsilon subunits (GlmE) and 2 sigma subunits (GlmS). GlmE exists as a homodimer and GlmS as a monomer. The cofactor is adenosylcob(III)alamin.

The catalysed reaction is (2S,3S)-3-methyl-L-aspartate = L-glutamate. The protein operates within amino-acid degradation; L-glutamate degradation via mesaconate pathway; acetate and pyruvate from L-glutamate: step 1/4. Functionally, catalyzes the carbon skeleton rearrangement of L-glutamate to L-threo-3-methylaspartate ((2S,3S)-3-methylaspartate). In Halobacterium salinarum (strain ATCC 700922 / JCM 11081 / NRC-1) (Halobacterium halobium), this protein is Glutamate mutase sigma subunit.